A 302-amino-acid chain; its full sequence is Deoxyhypusine hydroxylase (302 aa).

Position 1 is an N-acetylmethionine (Met-1). 5 HEAT-like PBS-type repeats span residues 54–80 (LKHE…VLQD), 87–113 (VRHE…YSTD), 175–201 (ERYR…GLKC), 206–232 (FRHE…TLAR), and 239–265 (VRHE…YITD). The Fe cation site is built by His-56, His-89, and Glu-90. His-208, His-241, and Glu-242 together coordinate Fe cation.

The protein belongs to the deoxyhypusine hydroxylase family. Fe(2+) is required as a cofactor.

It catalyses the reaction [eIF5A protein]-deoxyhypusine + AH2 + O2 = [eIF5A protein]-hypusine + A + H2O. It functions in the pathway protein modification; eIF5A hypusination. Its function is as follows. Catalyzes the hydroxylation of the N(6)-(4-aminobutyl)-L-lysine intermediate produced by deoxyhypusine synthase/DHPS on a critical lysine of the eukaryotic translation initiation factor 5A/eIF-5A. This is the second step of the post-translational modification of that lysine into an unusual amino acid residue named hypusine. Hypusination is unique to mature eIF-5A factor and is essential for its function. The sequence is that of Deoxyhypusine hydroxylase (Dohh) from Rattus norvegicus (Rat).